A 399-amino-acid chain; its full sequence is MVCLKTLSVFLAAFAVADARAVFKTQSNKNGEMIADNYIVVMKDGVSHDDFKAHVSSVASIHTTNKAKRGTNTAGMKREFDIMNWRGYHGHFDRDTLEEILNDSKVSYVEQDQVVRISGLTTQRSAPSWGLGRVSHRRAGSRDYVFDDSAGRGVTIYGVDTGIDIRHQDFGGRARWGTNTADRDNADRHGHGTHTASTFAGTAFGIAKNANIVAVKVLGSDGSGSTSGIIAGINYCVQDAQQRGILGKAAMNLSLGGGFSQANNDAVTRAQNAGIFVAVAAGNDNRDARAYSPASAPAVCTVASSTIQDSKSSFSNWGSIVDIYAPGSDIIAARPGGGSQSMSGTSMASPHVAGMGAYLIGMGADPRRVCDQLKQLSTPAISNPGSGTTNRLLYNGSGQ.

An N-terminal signal peptide occupies residues 1–19 (MVCLKTLSVFLAAFAVADA). Positions 20–118 (RAVFKTQSNK…VEQDQVVRIS (99 aa)) are excised as a propeptide. The region spanning 38–117 (YIVVMKDGVS…YVEQDQVVRI (80 aa)) is the Inhibitor I9 domain. The Peptidase S8 domain occupies 128-399 (SWGLGRVSHR…NRLLYNGSGQ (272 aa)). Active-site charge relay system residues include D160 and H191. Residue N252 is glycosylated (N-linked (GlcNAc...) asparagine). S346 functions as the Charge relay system in the catalytic mechanism. Over residues 380-392 (AISNPGSGTTNRL) the composition is skewed to polar residues. The interval 380–399 (AISNPGSGTTNRLLYNGSGQ) is disordered. The N-linked (GlcNAc...) asparagine glycan is linked to N395.

It belongs to the peptidase S8 family.

It is found in the secreted. Its function is as follows. Secreted subtilisin-like serine protease with keratinolytic activity that contributes to pathogenicity. The polypeptide is Subtilisin-like protease 4 (SUB4) (Arthroderma gypseum (strain ATCC MYA-4604 / CBS 118893) (Microsporum gypseum)).